The primary structure comprises 200 residues: Small ribosomal subunit protein eS1 (200 aa).

This sequence belongs to the eukaryotic ribosomal protein eS1 family. Part of the 30S ribosomal subunit.

The polypeptide is Small ribosomal subunit protein eS1 (Thermococcus kodakarensis (strain ATCC BAA-918 / JCM 12380 / KOD1) (Pyrococcus kodakaraensis (strain KOD1))).